A 142-amino-acid polypeptide reads, in one-letter code: MRQWEHYEHTADIGIRGYGDTLEEAFEAVALALFDVIVNVRKIEKKVEIDIEVEGEDLESLLYSFLEELLYLHDIEGLVFGDFKVKIEQKDGKYILRGKAYGEKFDPEKHEPKEEVKAITYHDMKIERLPDGRWMAQLVPDI.

Ca(2+) is bound by residues Asp-12, Asp-141, and Ile-142.

Belongs to the archease family.

In terms of biological role, activates the tRNA-splicing ligase complex by facilitating the enzymatic turnover of catalytic subunit RtcB. Acts by promoting the guanylylation of RtcB, a key intermediate step in tRNA ligation. Can also alter the NTP specificity of RtcB such that ATP, dGTP or ITP is used efficiently. In Pyrococcus furiosus (strain ATCC 43587 / DSM 3638 / JCM 8422 / Vc1), this protein is Protein archease.